Reading from the N-terminus, the 380-residue chain is MKWLVLLGLVSISECIVKIPLRRVKTMRKTLSEKNMLNNFLKEHAYRLSQISFRGSNLTIHPLRNTKDLVYLGNITIGTPPQEFQVVSDTGSSDLWVPSDFCAIEACSLHTRFRHLQSSTFRPTNRTFSITYGCGTVKGVVVHDTVRIGDLVSTDQPFGLSTAEHVSRCTPFDGVLGLNYPSISFWSTIPIFDKLKNEGAISEPVFAFYLSKDGQEGSVVMFGGVDHRYYKGELNWVPLIPAGNWMVHMDRIYIERNVIACSAGCKAVVDTGAAFIEGPKSQVDNMQKFIGARPRGSKYYVPCSVVNTLPSIIFRINSINYPVPGRAYILKNHRGRCYTTFKENQWSPSTEIWILGDVFLRLYFSVFDRGHDRIGLARAV.

The signal sequence occupies residues M1–C15. The propeptide at I16–F53 is activation peptide. 2 N-linked (GlcNAc...) asparagine glycosylation sites follow: N57 and N74. In terms of domain architecture, Peptidase A1 spans Y71–A377. D89 is an active-site residue. C102 and C107 are oxidised to a cystine. N125 carries an N-linked (GlcNAc...) asparagine glycan. The cysteines at positions 261 and 265 are disulfide-linked. D270 is an active-site residue. C303 and C337 are oxidised to a cystine.

This sequence belongs to the peptidase A1 family. Trophoblast and placental tissue. Produced specifically in the invasive binucleate cells of the placenta.

Its subcellular location is the secreted. The protein localises to the extracellular space. This Ovis aries (Sheep) protein is Pregnancy-associated glycoprotein 6.